We begin with the raw amino-acid sequence, 439 residues long: Serine--tRNA ligase (439 aa).

237–239 is a binding site for L-serine; that stretch reads TAE. 268-270 contributes to the ATP binding site; sequence RAE. Glu291 is an L-serine binding site. An ATP-binding site is contributed by 362–365; sequence EISS. Position 397 (Ser397) interacts with L-serine.

It belongs to the class-II aminoacyl-tRNA synthetase family. Type-1 seryl-tRNA synthetase subfamily. As to quaternary structure, homodimer. The tRNA molecule binds across the dimer.

The protein resides in the cytoplasm. The enzyme catalyses tRNA(Ser) + L-serine + ATP = L-seryl-tRNA(Ser) + AMP + diphosphate + H(+). The catalysed reaction is tRNA(Sec) + L-serine + ATP = L-seryl-tRNA(Sec) + AMP + diphosphate + H(+). It participates in aminoacyl-tRNA biosynthesis; selenocysteinyl-tRNA(Sec) biosynthesis; L-seryl-tRNA(Sec) from L-serine and tRNA(Sec): step 1/1. Functionally, catalyzes the attachment of serine to tRNA(Ser). Is also able to aminoacylate tRNA(Sec) with serine, to form the misacylated tRNA L-seryl-tRNA(Sec), which will be further converted into selenocysteinyl-tRNA(Sec). The polypeptide is Serine--tRNA ligase (Afipia carboxidovorans (strain ATCC 49405 / DSM 1227 / KCTC 32145 / OM5) (Oligotropha carboxidovorans)).